The sequence spans 487 residues: Probable cytochrome P450 513B1 (487 aa).

The helical transmembrane segment at M1–F18 threads the bilayer. Position 433 (C433) interacts with heme.

The protein belongs to the cytochrome P450 family. It depends on heme as a cofactor.

The protein localises to the membrane. This is Probable cytochrome P450 513B1 (cyp513B1) from Dictyostelium discoideum (Social amoeba).